The chain runs to 129 residues: Glycine cleavage system H protein (129 aa).

The Lipoyl-binding domain maps to 24–106 (TYTVGITEHA…YGQGWIFKIK (83 aa)). Lys-65 carries the N6-lipoyllysine modification.

Belongs to the GcvH family. As to quaternary structure, the glycine cleavage system is composed of four proteins: P, T, L and H. The cofactor is (R)-lipoate.

In terms of biological role, the glycine cleavage system catalyzes the degradation of glycine. The H protein shuttles the methylamine group of glycine from the P protein to the T protein. This is Glycine cleavage system H protein from Cronobacter sakazakii (strain ATCC BAA-894) (Enterobacter sakazakii).